A 725-amino-acid polypeptide reads, in one-letter code: Kinesin-like protein KIF2C (725 aa).

Position 2 is an N-acetylalanine (Ala2). The interval 2-254 is globular; sequence AMDSSLQARL…CHPLTMTDPI (253 aa). 2 positions are modified to phosphoserine: Ser6 and Ser22. The interval 89–116 is disordered; the sequence is QKQKRRSVNSKIPAPKESLRSRSTRMST. Ser95 is subject to Phosphoserine; by AURKB. The Microtubule tip localization signal signature appears at 98-101; that stretch reads SKIP. Residues Ser106, Ser109, Ser111, Ser115, Ser166, Ser175, Ser187, and Ser192 each carry the phosphoserine modification. Positions 207–238 are negative regulator of microtubule-binding; that stretch reads EKKAQNSEMRMKRAQEYDSSFPNWEFARMIKE. The Kinesin motor domain maps to 258 to 588; the sequence is RICVCVRKRP…LRYADRVKEL (331 aa). ATP is bound by residues Arg264 and 348–355; that span reads GQTGSGKT. The short motif at 415 to 418 is the Nuclear localization signal element; it reads KKAK. 3 positions are modified to phosphoserine: Ser519, Ser621, and Ser633. Residues 618–658 are a coiled coil; the sequence is GNLSKEEEELSSQMSSFNEAMTQIRELEEKAMEELKEIIQQ.

This sequence belongs to the TRAFAC class myosin-kinesin ATPase superfamily. Kinesin family. MCAK/KIF2 subfamily. Interacts with CENPH. Interacts with MTUS2/TIP150; the interaction is direct. Interacts with MAPRE1; the interaction is direct, regulated by phosphorylation and is probably required for targeting to growing microtubule plus ends. Interacts with KIF18B at microtubule tips; this interaction increases the affinity of both partners for microtubule plus ends and is required for robust microtubule depolymerization. Phosphorylation by AURKA or AURKB strongly reduces KIF18B-binding. In terms of processing, phosphorylation by AURKB, regulates association with centromeres and kinetochores and the microtubule depolymerization activity. Post-translationally, ubiquitinated. As to expression, expressed at high levels in thymus and testis, at low levels in small intestine, the mucosal lining of colon, and placenta, and at very low levels in spleen and ovary; expression is not detected in prostate, peripheral blood Leukocytes, heart, brain, lung, liver, skeletal muscle, kidney or pancreas. Isoform 2 is testis-specific.

It localises to the cytoplasm. Its subcellular location is the cytoskeleton. The protein localises to the nucleus. The protein resides in the chromosome. It is found in the centromere. It localises to the kinetochore. In terms of biological role, in complex with KIF18B, constitutes the major microtubule plus-end depolymerizing activity in mitotic cells. Regulates the turnover of microtubules at the kinetochore and functions in chromosome segregation during mitosis. Plays a role in chromosome congression and is required for the lateral to end-on conversion of the chromosome-microtubule attachment. In Homo sapiens (Human), this protein is Kinesin-like protein KIF2C (KIF2C).